The chain runs to 456 residues: Bifunctional protein GlmU (456 aa).

The interval 1–229 (MTKKALSAVI…VMEVEGANNR (229 aa)) is pyrophosphorylase. UDP-N-acetyl-alpha-D-glucosamine is bound by residues 11 to 14 (LAAG), Lys25, Gln76, 81 to 82 (GT), 103 to 105 (YGD), Gly140, Glu154, Asn169, and Asn227. Residue Asp105 participates in Mg(2+) binding. Asn227 provides a ligand contact to Mg(2+). The interval 230–250 (LQLAALERYFQNKQASKLLLE) is linker. The N-acetyltransferase stretch occupies residues 251 to 456 (GVMIYDPARF…QGWQRPIKKK (206 aa)). Positions 333 and 351 each coordinate UDP-N-acetyl-alpha-D-glucosamine. His363 serves as the catalytic Proton acceptor. The UDP-N-acetyl-alpha-D-glucosamine site is built by Tyr366 and Asn377. Residues Ala380, 386-387 (NY), Ser405, Ala423, and Arg440 each bind acetyl-CoA.

This sequence in the N-terminal section; belongs to the N-acetylglucosamine-1-phosphate uridyltransferase family. It in the C-terminal section; belongs to the transferase hexapeptide repeat family. Homotrimer. The cofactor is Mg(2+).

Its subcellular location is the cytoplasm. The catalysed reaction is alpha-D-glucosamine 1-phosphate + acetyl-CoA = N-acetyl-alpha-D-glucosamine 1-phosphate + CoA + H(+). It carries out the reaction N-acetyl-alpha-D-glucosamine 1-phosphate + UTP + H(+) = UDP-N-acetyl-alpha-D-glucosamine + diphosphate. Its pathway is nucleotide-sugar biosynthesis; UDP-N-acetyl-alpha-D-glucosamine biosynthesis; N-acetyl-alpha-D-glucosamine 1-phosphate from alpha-D-glucosamine 6-phosphate (route II): step 2/2. It functions in the pathway nucleotide-sugar biosynthesis; UDP-N-acetyl-alpha-D-glucosamine biosynthesis; UDP-N-acetyl-alpha-D-glucosamine from N-acetyl-alpha-D-glucosamine 1-phosphate: step 1/1. The protein operates within bacterial outer membrane biogenesis; LPS lipid A biosynthesis. Functionally, catalyzes the last two sequential reactions in the de novo biosynthetic pathway for UDP-N-acetylglucosamine (UDP-GlcNAc). The C-terminal domain catalyzes the transfer of acetyl group from acetyl coenzyme A to glucosamine-1-phosphate (GlcN-1-P) to produce N-acetylglucosamine-1-phosphate (GlcNAc-1-P), which is converted into UDP-GlcNAc by the transfer of uridine 5-monophosphate (from uridine 5-triphosphate), a reaction catalyzed by the N-terminal domain. This chain is Bifunctional protein GlmU, found in Haemophilus influenzae (strain 86-028NP).